The primary structure comprises 144 residues: 3-hydroxyacyl-[acyl-carrier-protein] dehydratase FabZ (144 aa).

The active site involves His51.

Belongs to the thioester dehydratase family. FabZ subfamily.

It is found in the cytoplasm. The catalysed reaction is a (3R)-hydroxyacyl-[ACP] = a (2E)-enoyl-[ACP] + H2O. Involved in unsaturated fatty acids biosynthesis. Catalyzes the dehydration of short chain beta-hydroxyacyl-ACPs and long chain saturated and unsaturated beta-hydroxyacyl-ACPs. The polypeptide is 3-hydroxyacyl-[acyl-carrier-protein] dehydratase FabZ (Clostridium botulinum (strain Loch Maree / Type A3)).